The sequence spans 545 residues: Eukaryotic translation initiation factor 3 subunit D-2 (545 aa).

Positions 99 to 113 (FRGNIRNNPRTRGRT) are enriched in basic residues. The segment at 99–158 (FRGNIRNNPRTRGRTGRGGAVTGIGGNQPGVGVNERTKYGKGRDNRRQMGRRFGRNAPTR) is disordered. A compositionally biased stretch (gly residues) spans 114–127 (GRGGAVTGIGGNQP). Residues 133–145 (ERTKYGKGRDNRR) show a composition bias toward basic and acidic residues. An RNA gate region spans residues 287–301 (QFDLLTVNETALEPP).

This sequence belongs to the eIF-3 subunit D family. As to quaternary structure, component of the eukaryotic translation initiation factor 3 (eIF-3) complex. The eIF-3 complex interacts with pix.

It localises to the cytoplasm. MRNA cap-binding component of the eukaryotic translation initiation factor 3 (eIF-3) complex, which is involved in protein synthesis of a specialized repertoire of mRNAs and, together with other initiation factors, stimulates binding of mRNA and methionyl-tRNAi to the 40S ribosome. The eIF-3 complex specifically targets and initiates translation of a subset of mRNAs involved in cell proliferation. In the eIF-3 complex, eif3d specifically recognizes and binds the 7-methylguanosine cap of a subset of mRNAs. The polypeptide is Eukaryotic translation initiation factor 3 subunit D-2 (Drosophila persimilis (Fruit fly)).